We begin with the raw amino-acid sequence, 360 residues long: Methylthioribose-1-phosphate isomerase (360 aa).

The active-site Proton donor is the Asp246.

It belongs to the eIF-2B alpha/beta/delta subunits family. MtnA subfamily.

Its subcellular location is the cytoplasm. It localises to the nucleus. The enzyme catalyses 5-(methylsulfanyl)-alpha-D-ribose 1-phosphate = 5-(methylsulfanyl)-D-ribulose 1-phosphate. It participates in amino-acid biosynthesis; L-methionine biosynthesis via salvage pathway; L-methionine from S-methyl-5-thio-alpha-D-ribose 1-phosphate: step 1/6. In terms of biological role, catalyzes the interconversion of methylthioribose-1-phosphate (MTR-1-P) into methylthioribulose-1-phosphate (MTRu-1-P). This chain is Methylthioribose-1-phosphate isomerase, found in Aedes aegypti (Yellowfever mosquito).